The sequence spans 273 residues: Dermonecrotic toxin LspiSicTox-betaIE1ii (273 aa).

The active site involves His-5. Glu-25 and Asp-27 together coordinate Mg(2+). The active-site Nucleophile is His-41. Intrachain disulfides connect Cys-45-Cys-51 and Cys-47-Cys-189. Asp-85 is a Mg(2+) binding site.

The protein belongs to the arthropod phospholipase D family. Class II subfamily. The cofactor is Mg(2+). As to expression, expressed by the venom gland.

It is found in the secreted. It carries out the reaction an N-(acyl)-sphingosylphosphocholine = an N-(acyl)-sphingosyl-1,3-cyclic phosphate + choline. It catalyses the reaction an N-(acyl)-sphingosylphosphoethanolamine = an N-(acyl)-sphingosyl-1,3-cyclic phosphate + ethanolamine. The enzyme catalyses a 1-acyl-sn-glycero-3-phosphocholine = a 1-acyl-sn-glycero-2,3-cyclic phosphate + choline. The catalysed reaction is a 1-acyl-sn-glycero-3-phosphoethanolamine = a 1-acyl-sn-glycero-2,3-cyclic phosphate + ethanolamine. In terms of biological role, dermonecrotic toxins cleave the phosphodiester linkage between the phosphate and headgroup of certain phospholipids (sphingolipid and lysolipid substrates), forming an alcohol (often choline) and a cyclic phosphate. This toxin acts on sphingomyelin (SM). It may also act on ceramide phosphoethanolamine (CPE), lysophosphatidylcholine (LPC) and lysophosphatidylethanolamine (LPE), but not on lysophosphatidylserine (LPS), and lysophosphatidylglycerol (LPG). It acts by transphosphatidylation, releasing exclusively cyclic phosphate products as second products. Induces dermonecrosis, hemolysis, increased vascular permeability, edema, inflammatory response, and platelet aggregation. The chain is Dermonecrotic toxin LspiSicTox-betaIE1ii from Loxosceles spinulosa (Recluse spider).